A 213-amino-acid polypeptide reads, in one-letter code: Thiamine-phosphate synthase (213 aa).

Residues Gln40–Lys44 and Asn75 contribute to the 4-amino-2-methyl-5-(diphosphooxymethyl)pyrimidine site. Positions 76 and 95 each coordinate Mg(2+). Position 113 (Ser113) interacts with 4-amino-2-methyl-5-(diphosphooxymethyl)pyrimidine. 2-[(2R,5Z)-2-carboxy-4-methylthiazol-5(2H)-ylidene]ethyl phosphate is bound at residue Thr139 to Ser141. Lys142 is a binding site for 4-amino-2-methyl-5-(diphosphooxymethyl)pyrimidine. Residues Gly171 and Ile191–Ser192 each bind 2-[(2R,5Z)-2-carboxy-4-methylthiazol-5(2H)-ylidene]ethyl phosphate.

It belongs to the thiamine-phosphate synthase family. Mg(2+) is required as a cofactor.

The catalysed reaction is 2-[(2R,5Z)-2-carboxy-4-methylthiazol-5(2H)-ylidene]ethyl phosphate + 4-amino-2-methyl-5-(diphosphooxymethyl)pyrimidine + 2 H(+) = thiamine phosphate + CO2 + diphosphate. The enzyme catalyses 2-(2-carboxy-4-methylthiazol-5-yl)ethyl phosphate + 4-amino-2-methyl-5-(diphosphooxymethyl)pyrimidine + 2 H(+) = thiamine phosphate + CO2 + diphosphate. It catalyses the reaction 4-methyl-5-(2-phosphooxyethyl)-thiazole + 4-amino-2-methyl-5-(diphosphooxymethyl)pyrimidine + H(+) = thiamine phosphate + diphosphate. The protein operates within cofactor biosynthesis; thiamine diphosphate biosynthesis; thiamine phosphate from 4-amino-2-methyl-5-diphosphomethylpyrimidine and 4-methyl-5-(2-phosphoethyl)-thiazole: step 1/1. In terms of biological role, condenses 4-methyl-5-(beta-hydroxyethyl)thiazole monophosphate (THZ-P) and 2-methyl-4-amino-5-hydroxymethyl pyrimidine pyrophosphate (HMP-PP) to form thiamine monophosphate (TMP). In Staphylococcus aureus (strain JH1), this protein is Thiamine-phosphate synthase.